The sequence spans 754 residues: MIETIQADWIKSEAINLENCCNDNPLKILGPHFYEEQWVIRVWMPEADEVKINFKNNTYKAESINHKWLFEAILPENPNFNYEINISRGGITHTQHDPWSYREEWMGEVDRHLFAEGNHHHIWEKMGAHLIEEKNQKGVMFCIWAPNAKSISIIGDINSWDGRHHPMQKRLGGIWELFMPTMKEGDTYKYEIRTQQGHIYEKADPYGFLHEIRPQNGSIVSKLKNFNWNDSSWISNRDSSSQINKPISVYEMHLGSWLHESTDNKYLEDNGEPRDPVPAADLKPGTRLLTYPELTEKLIPYVKDRGFTHIELMPISEHPFDGSWGYQVTGWYAPTSRFGTPNEFREFVNKCHEEGIGVILDWVPGHFPKDKHGLAFFDGCHLYEHGDSRIGEHKEWGTLIFNYSRNEVRNFLVANLIYWFEEFHIDGIRVDAVASMLYRDYLRPDGEWIPNENGGNENIEAVKFLQQANHVLFQHFPGALSIAEESTTWPMVTKPTDMGGLGFNLKWNMGWMHDMLDYFEIDPWFRQFHQNSVTFSITYNYTENFMLALSHDEVVHGKSHLLHKMPGDDWKKYANTRALLTYMWTHPGKKTIFMGMEFGQRQEWNVWDDLQWELLEFEPHKGIRNLIDDLNALYKNEAALWKNDFDPYGFQWIDCNDKSNSVISFMRRENDTNEWLVVVANFTPNTHGSYKVGVPVEGFYKEIFNSDGSRYGGSNKGNMGGKETINYNIHDYQNALELALPPLSVSIFKHLSKK.

Asp-431 serves as the catalytic Nucleophile. The active-site Proton donor is Glu-484.

The protein belongs to the glycosyl hydrolase 13 family. GlgB subfamily. As to quaternary structure, monomer.

The enzyme catalyses Transfers a segment of a (1-&gt;4)-alpha-D-glucan chain to a primary hydroxy group in a similar glucan chain.. Its pathway is glycan biosynthesis; glycogen biosynthesis. Its function is as follows. Catalyzes the formation of the alpha-1,6-glucosidic linkages in glycogen by scission of a 1,4-alpha-linked oligosaccharide from growing alpha-1,4-glucan chains and the subsequent attachment of the oligosaccharide to the alpha-1,6 position. This chain is 1,4-alpha-glucan branching enzyme GlgB, found in Prochlorococcus marinus (strain MIT 9215).